Reading from the N-terminus, the 209-residue chain is Uracil phosphoribosyltransferase (209 aa).

5-phospho-alpha-D-ribose 1-diphosphate is bound by residues R79, R104, and 131 to 139 (DPMLATGGS). Residues I194 and 199–201 (GDA) contribute to the uracil site. D200 is a 5-phospho-alpha-D-ribose 1-diphosphate binding site.

This sequence belongs to the UPRTase family. The cofactor is Mg(2+).

It catalyses the reaction UMP + diphosphate = 5-phospho-alpha-D-ribose 1-diphosphate + uracil. It participates in pyrimidine metabolism; UMP biosynthesis via salvage pathway; UMP from uracil: step 1/1. Its activity is regulated as follows. Allosterically activated by GTP. Its function is as follows. Catalyzes the conversion of uracil and 5-phospho-alpha-D-ribose 1-diphosphate (PRPP) to UMP and diphosphate. In Exiguobacterium sp. (strain ATCC BAA-1283 / AT1b), this protein is Uracil phosphoribosyltransferase.